Consider the following 183-residue polypeptide: Caltractin ICL1f (183 aa).

Residues 1–19 (MARRGQQPPQQQQQAQPAQ) show a composition bias toward low complexity. Residues 1 to 30 (MARRGQQPPQQQQQAQPAQKNQAGKFNPAE) are disordered. 4 EF-hand domains span residues 39 to 74 (EEVL…LGFE), 75 to 110 (AKNQ…RISE), 112 to 147 (DSKA…LGET), and 148 to 183 (MDDS…KTFA). 10 residues coordinate Ca(2+): aspartate 52, aspartate 54, threonine 56, serine 58, glutamate 63, aspartate 88, aspartate 90, serine 92, glutamine 94, and glutamate 99.

This sequence belongs to the centrin family. In terms of assembly, monomer.

The protein localises to the cytoplasm. The protein resides in the cytoskeleton. Functionally, plays a fundamental role in microtubule organizing center structure and function. Component of the infraciliary lattice (ICL) and the ciliary basal bodies. The protein is Caltractin ICL1f (Icl1f) of Paramecium tetraurelia.